We begin with the raw amino-acid sequence, 312 residues long: Glutaminase (312 aa).

Substrate-binding residues include Ser67, Asn118, Glu162, Asn169, Tyr193, Tyr245, and Val263.

Belongs to the glutaminase family. In terms of assembly, homotetramer.

The catalysed reaction is L-glutamine + H2O = L-glutamate + NH4(+). The protein is Glutaminase of Bordetella avium (strain 197N).